Consider the following 328-residue polypeptide: Ferredoxin--NADP reductase 1 (328 aa).

FAD contacts are provided by E37, K45, Y49, V89, and T310.

This sequence belongs to the ferredoxin--NADP reductase type 2 family. Homodimer. FAD serves as cofactor.

It carries out the reaction 2 reduced [2Fe-2S]-[ferredoxin] + NADP(+) + H(+) = 2 oxidized [2Fe-2S]-[ferredoxin] + NADPH. The polypeptide is Ferredoxin--NADP reductase 1 (Latilactobacillus sakei subsp. sakei (strain 23K) (Lactobacillus sakei subsp. sakei)).